Consider the following 339-residue polypeptide: DNA-directed RNA polymerase subunit alpha (339 aa).

Residues 1 to 233 (MVREEVAGST…DLFLPFLHAE (233 aa)) form an alpha N-terminal domain (alpha-NTD) region. The interval 264–339 (KKGIPLNCIF…IDLLKNKLSF (76 aa)) is alpha C-terminal domain (alpha-CTD).

The protein belongs to the RNA polymerase alpha chain family. In terms of assembly, in plastids the minimal PEP RNA polymerase catalytic core is composed of four subunits: alpha, beta, beta', and beta''. When a (nuclear-encoded) sigma factor is associated with the core the holoenzyme is formed, which can initiate transcription.

Its subcellular location is the plastid. The protein resides in the chloroplast. It catalyses the reaction RNA(n) + a ribonucleoside 5'-triphosphate = RNA(n+1) + diphosphate. In terms of biological role, DNA-dependent RNA polymerase catalyzes the transcription of DNA into RNA using the four ribonucleoside triphosphates as substrates. This chain is DNA-directed RNA polymerase subunit alpha, found in Festucopsis serpentini.